A 425-amino-acid polypeptide reads, in one-letter code: MTRLDSVERAVADIGAGKAVIVIDDEDRENEGDLIFAAEKATPELVAFMVRYTSGYLCVPLDGAVCDRLGLLPMYAVNQDKHGTAYTVTVDAKNGVGTGISASDRATTMRLLADPASVAEDFTRPGHVVPLRAKDGGVLRRPGHTEAAVDLARMAGLQPAGAICEIVSQKDEGSMAQTDELRVFADEHGLALITIADLIEWRRKHEKHIERVAEARIPTRHGEFRAIGYTSIYEDVEHVALVRGEIAGPNSDGDDVLVRVHSECLTGDVFGSRRCDCGPQLDAAMAMVAREGRGVVLYMRGHEGRGIGLLHKLQAYQLQDAGDDTVDANLKLGLPADARDYGIGAQILVDLGVRSMRLLTNNPAKRVGLDGYGLHIIERVPLPVRANAENIRYLMTKRDRMGHDLTGLDDFHESVHLPGEFGGAL.

Positions methionine 1–lysine 204 are DHBP synthase. Residues arginine 28 to glutamate 29, aspartate 33, arginine 141 to threonine 145, and glutamate 165 contribute to the D-ribulose 5-phosphate site. Glutamate 29 is a Mg(2+) binding site. Histidine 144 is a Mg(2+) binding site. Positions histidine 205–leucine 425 are GTP cyclohydrolase II. Arginine 259–glutamate 263 serves as a coordination point for GTP. 3 residues coordinate Zn(2+): cysteine 264, cysteine 275, and cysteine 277. GTP contacts are provided by residues glutamine 280, glutamate 303–arginine 305, and threonine 325. Aspartate 337 (proton acceptor; for GTP cyclohydrolase activity) is an active-site residue. Arginine 339 (nucleophile; for GTP cyclohydrolase activity) is an active-site residue. GTP-binding residues include threonine 360 and lysine 365.

In the N-terminal section; belongs to the DHBP synthase family. The protein in the C-terminal section; belongs to the GTP cyclohydrolase II family. It depends on Mg(2+) as a cofactor. Requires Mn(2+) as cofactor. Zn(2+) is required as a cofactor.

The catalysed reaction is D-ribulose 5-phosphate = (2S)-2-hydroxy-3-oxobutyl phosphate + formate + H(+). The enzyme catalyses GTP + 4 H2O = 2,5-diamino-6-hydroxy-4-(5-phosphoribosylamino)-pyrimidine + formate + 2 phosphate + 3 H(+). Its pathway is cofactor biosynthesis; riboflavin biosynthesis; 2-hydroxy-3-oxobutyl phosphate from D-ribulose 5-phosphate: step 1/1. The protein operates within cofactor biosynthesis; riboflavin biosynthesis; 5-amino-6-(D-ribitylamino)uracil from GTP: step 1/4. Catalyzes the conversion of D-ribulose 5-phosphate to formate and 3,4-dihydroxy-2-butanone 4-phosphate. Functionally, catalyzes the conversion of GTP to 2,5-diamino-6-ribosylamino-4(3H)-pyrimidinone 5'-phosphate (DARP), formate and pyrophosphate. This Mycobacterium marinum (strain ATCC BAA-535 / M) protein is Riboflavin biosynthesis protein RibBA.